The primary structure comprises 293 residues: Tumor necrosis factor receptor superfamily member 13B (293 aa).

Topologically, residues M1 to S165 are extracellular. TNFR-Cys repeat units follow at residues S33 to R67 and S70 to C104. 6 cysteine pairs are disulfide-bonded: C34–C47, C50–C62, C54–C66, C71–C86, C89–C100, and C93–C104. Residues P115 to A146 are disordered. Residues V126 to R135 show a composition bias toward polar residues. N128 is a glycosylation site (N-linked (GlcNAc...) asparagine). A helical; Signal-anchor for type III membrane protein transmembrane segment spans residues T166 to L186. Residues K187–A293 lie on the Cytoplasmic side of the membrane. The tract at residues P192–P226 is disordered.

As to quaternary structure, binds TRAF2, TRAF5 and TRAF6. Binds the NH2-terminal domain of CAMLG with its C-terminus. In terms of tissue distribution, highly expressed in spleen, thymus, small intestine and peripheral blood leukocytes. Expressed in resting B-cells and activated T-cells, but not in resting T-cells.

It is found in the membrane. Receptor for TNFSF13/APRIL and TNFSF13B/TALL1/BAFF/BLYS that binds both ligands with similar high affinity. Mediates calcineurin-dependent activation of NF-AT, as well as activation of NF-kappa-B and AP-1. Involved in the stimulation of B- and T-cell function and the regulation of humoral immunity. This Homo sapiens (Human) protein is Tumor necrosis factor receptor superfamily member 13B (TNFRSF13B).